The primary structure comprises 845 residues: Beta-galactosidase 11 (845 aa).

The N-terminal stretch at 1–26 (MRKHSLDRWLLTAVLVVLLSSSSSFA) is a signal peptide. N104 carries an N-linked (GlcNAc...) asparagine glycan. Catalysis depends on E197, which acts as the Proton donor. E268 serves as the catalytic Nucleophile. N-linked (GlcNAc...) asparagine glycosylation is found at N269, N300, N395, N752, N784, and N814. In terms of domain architecture, SUEL-type lectin spans 751–840 (DNVSLTATLK…KMLAVQVKCG (90 aa)).

The protein belongs to the glycosyl hydrolase 35 family.

It is found in the secreted. Its subcellular location is the extracellular space. It localises to the apoplast. The catalysed reaction is Hydrolysis of terminal non-reducing beta-D-galactose residues in beta-D-galactosides.. The chain is Beta-galactosidase 11 (BGAL11) from Arabidopsis thaliana (Mouse-ear cress).